Consider the following 567-residue polypeptide: Urease subunit alpha (567 aa).

A Urease domain is found at 129–567; that stretch reads GGVDSHIHFI…LPLAQRYFLF (439 aa). Ni(2+)-binding residues include histidine 134, histidine 136, and lysine 217. Lysine 217 carries the post-translational modification N6-carboxylysine. Residue histidine 219 coordinates substrate. The Ni(2+) site is built by histidine 246 and histidine 272. Histidine 320 (proton donor) is an active-site residue. Aspartate 360 contacts Ni(2+).

The protein belongs to the metallo-dependent hydrolases superfamily. Urease alpha subunit family. As to quaternary structure, heterotrimer of UreA (gamma), UreB (beta) and UreC (alpha) subunits. Three heterotrimers associate to form the active enzyme. Ni cation is required as a cofactor. Post-translationally, carboxylation allows a single lysine to coordinate two nickel ions.

It localises to the cytoplasm. The catalysed reaction is urea + 2 H2O + H(+) = hydrogencarbonate + 2 NH4(+). It functions in the pathway nitrogen metabolism; urea degradation; CO(2) and NH(3) from urea (urease route): step 1/1. This chain is Urease subunit alpha, found in Pseudomonas putida (strain ATCC 700007 / DSM 6899 / JCM 31910 / BCRC 17059 / LMG 24140 / F1).